A 468-amino-acid chain; its full sequence is Trigger factor (468 aa).

Residues 162–243 form the PPIase FKBP-type domain; sequence GDVLTLDLQA…VSQVAARELP (82 aa). Residues 428 to 468 form a disordered region; the sequence is NGEIVDLDDEEDEETEAAEADATEAADAEKADDKAEEKTEG. Positions 432-453 are enriched in acidic residues; sequence VDLDDEEDEETEAAEADATEAA. The segment covering 454–468 has biased composition (basic and acidic residues); sequence DAEKADDKAEEKTEG.

This sequence belongs to the FKBP-type PPIase family. Tig subfamily.

It is found in the cytoplasm. The enzyme catalyses [protein]-peptidylproline (omega=180) = [protein]-peptidylproline (omega=0). Functionally, involved in protein export. Acts as a chaperone by maintaining the newly synthesized protein in an open conformation. Functions as a peptidyl-prolyl cis-trans isomerase. In Streptomyces coelicolor (strain ATCC BAA-471 / A3(2) / M145), this protein is Trigger factor.